We begin with the raw amino-acid sequence, 436 residues long: Trigger factor (436 aa).

A PPIase FKBP-type domain is found at 161 to 246 (DDRVTVDFVG…VNKVEGLSLP (86 aa)).

The protein belongs to the FKBP-type PPIase family. Tig subfamily.

Its subcellular location is the cytoplasm. The catalysed reaction is [protein]-peptidylproline (omega=180) = [protein]-peptidylproline (omega=0). Functionally, involved in protein export. Acts as a chaperone by maintaining the newly synthesized protein in an open conformation. Functions as a peptidyl-prolyl cis-trans isomerase. The protein is Trigger factor of Pseudoalteromonas atlantica (strain T6c / ATCC BAA-1087).